The primary structure comprises 282 residues: Pantothenate synthetase (282 aa).

26 to 33 provides a ligand contact to ATP; that stretch reads MGNLHDGH. The active-site Proton donor is His33. Gln57 serves as a coordination point for (R)-pantoate. Beta-alanine is bound at residue Gln57. Residue 148-151 participates in ATP binding; sequence GKKD. Position 154 (Gln154) interacts with (R)-pantoate. Position 185–188 (185–188) interacts with ATP; sequence LSSR.

Belongs to the pantothenate synthetase family. As to quaternary structure, homodimer.

It localises to the cytoplasm. The catalysed reaction is (R)-pantoate + beta-alanine + ATP = (R)-pantothenate + AMP + diphosphate + H(+). It functions in the pathway cofactor biosynthesis; (R)-pantothenate biosynthesis; (R)-pantothenate from (R)-pantoate and beta-alanine: step 1/1. Catalyzes the condensation of pantoate with beta-alanine in an ATP-dependent reaction via a pantoyl-adenylate intermediate. In Polaromonas sp. (strain JS666 / ATCC BAA-500), this protein is Pantothenate synthetase.